Reading from the N-terminus, the 164-residue chain is Disulfide bond formation protein B (164 aa).

The Cytoplasmic segment spans residues 1–9 (MTLPSARTC). A helical membrane pass occupies residues 10 to 26 (FLLGFLFCAALLAAALY). Residues 27–44 (FQFSGGLEPCPLCISQRI) are Periplasmic-facing. Residues Cys36 and Cys39 are joined by a disulfide bond. A helical membrane pass occupies residues 45-61 (MVLAVALVFLAAAIHHP). The Cytoplasmic portion of the chain corresponds to 62 to 68 (ASLGIRA). The chain crosses the membrane as a helical span at residues 69–85 (YALLGTAVALGGASISG). Residues 86-142 (RHVWLLHLPPEEVPECGPGLSYMFRNFPLGDTLKAMLSGTGDCAKVDWTFLGLSMPA) lie on the Periplasmic side of the membrane. A disulfide bridge links Cys101 with Cys128. Residues 143-161 (WVLICFLGLGAFSLLQWWN) form a helical membrane-spanning segment. Residues 162–164 (AER) lie on the Cytoplasmic side of the membrane.

It belongs to the DsbB family.

Its subcellular location is the cell inner membrane. Functionally, required for disulfide bond formation in some periplasmic proteins. Acts by oxidizing the DsbA protein. The sequence is that of Disulfide bond formation protein B from Methylococcus capsulatus (strain ATCC 33009 / NCIMB 11132 / Bath).